The primary structure comprises 35 residues: Cecropin-B (35 aa).

Leu-35 is modified (leucine amide).

The protein belongs to the cecropin family.

Its subcellular location is the secreted. In terms of biological role, cecropins have lytic and antibacterial activity against several Gram-positive and Gram-negative bacteria. The polypeptide is Cecropin-B (Antheraea pernyi (Chinese oak silk moth)).